The following is a 125-amino-acid chain: Classical arabinogalactan protein 27 (125 aa).

An N-terminal signal peptide occupies residues 1–21 (MASSILLTLITFIFLSSLSLS). Over residues 20-36 (LSSPTTNTIPSSQTISP) the composition is skewed to low complexity. The tract at residues 20-95 (LSSPTTNTIP…ASPPASSLAS (76 aa)) is disordered. Over residues 53-66 (AVSSTQTIPSSSTL) the composition is skewed to polar residues. The segment covering 77–95 (DPDPAFAPSASPPASSLAS) has biased composition (low complexity). S98 carries GPI-anchor amidated serine lipidation. Residues 99-125 (QAPGVFIYFVFAAVYCFSLRLLAVSAI) constitute a propeptide, removed in mature form.

The protein belongs to the classical AGP family. In terms of processing, O-glycosylated on the hydroxyproline residues.

Its subcellular location is the cell membrane. In terms of biological role, proteoglycan that seems to be implicated in diverse developmental roles such as differentiation, cell-cell recognition, embryogenesis and programmed cell death. In Arabidopsis thaliana (Mouse-ear cress), this protein is Classical arabinogalactan protein 27 (AGP27).